Here is a 198-residue protein sequence, read N- to C-terminus: Prolactin (198 aa).

Intrachain disulfides connect C4-C11, C58-C173, and C190-C198.

This sequence belongs to the somatotropin/prolactin family. In terms of tissue distribution, pituitary gland.

The protein resides in the secreted. The polypeptide is Prolactin (Chelonia mydas (Green sea-turtle)).